Here is a 26-residue protein sequence, read N- to C-terminus: Cytochrome c oxidase subunit 2 (26 aa).

The protein belongs to the cytochrome c oxidase subunit 2 family. In terms of assembly, component of the cytochrome c oxidase (complex IV, CIV), a multisubunit enzyme composed of a catalytic core of 3 subunits and several supernumerary subunits. The complex exists as a monomer or a dimer and forms supercomplexes (SCs) in the inner mitochondrial membrane with ubiquinol-cytochrome c oxidoreductase (cytochrome b-c1 complex, complex III, CIII). The cofactor is Cu cation.

It is found in the mitochondrion inner membrane. It catalyses the reaction 4 Fe(II)-[cytochrome c] + O2 + 8 H(+)(in) = 4 Fe(III)-[cytochrome c] + 2 H2O + 4 H(+)(out). In terms of biological role, component of the cytochrome c oxidase, the last enzyme in the mitochondrial electron transport chain which drives oxidative phosphorylation. The respiratory chain contains 3 multisubunit complexes succinate dehydrogenase (complex II, CII), ubiquinol-cytochrome c oxidoreductase (cytochrome b-c1 complex, complex III, CIII) and cytochrome c oxidase (complex IV, CIV), that cooperate to transfer electrons derived from NADH and succinate to molecular oxygen, creating an electrochemical gradient over the inner membrane that drives transmembrane transport and the ATP synthase. Cytochrome c oxidase is the component of the respiratory chain that catalyzes the reduction of oxygen to water. Electrons originating from reduced cytochrome c in the intermembrane space (IMS) are transferred via the dinuclear copper A center (CU(A)) of subunit 2 and heme A of subunit 1 to the active site in subunit 1, a binuclear center (BNC) formed by heme A3 and copper B (CU(B)). The BNC reduces molecular oxygen to 2 water molecules using 4 electrons from cytochrome c in the IMS and 4 protons from the mitochondrial matrix. This Solanum tuberosum (Potato) protein is Cytochrome c oxidase subunit 2 (COX2).